The primary structure comprises 718 residues: Coiled-coil domain-containing protein 157 (718 aa).

A coiled-coil region spans residues 300–603 (LRAQLEDAEG…LTKIREVAQQ (304 aa)). The span at 469–482 (RGSLDEAEAQRSEL) shows a compositional bias: basic and acidic residues. Disordered stretches follow at residues 469-490 (RGSL…QSLQ) and 617-690 (PPYK…TQNP). Over residues 639-659 (TGRRQSPGSRTSSTGRTHPGG) the composition is skewed to low complexity.

This chain is Coiled-coil domain-containing protein 157 (Ccdc157), found in Mus musculus (Mouse).